We begin with the raw amino-acid sequence, 395 residues long: Torsin-3A (395 aa).

The N-terminal stretch at 1-24 (MFFGAFWLLLLLLLPPLRPPGAQG) is a signal peptide. Asn-120 carries N-linked (GlcNAc...) asparagine glycosylation. Residue 165-172 (GWSGTGKN) participates in ATP binding.

This sequence belongs to the ClpA/ClpB family. Torsin subfamily. May not form homohexamers. N-glycosylated.

It is found in the cytoplasm. The protein localises to the endoplasmic reticulum lumen. In Rattus norvegicus (Rat), this protein is Torsin-3A (Tor3a).